The chain runs to 489 residues: Protein TOS4 (489 aa).

2 stretches are compositionally biased toward polar residues: residues 1–10 (MSSQFPSSPY) and 20–32 (NYKQQPNCPSSNY). The interval 1–101 (MSSQFPSSPY…FSSKLSSPSR (101 aa)) is disordered. A Phosphoserine modification is found at serine 40. Residues 56-68 (PSSSIGRVSSPVR) show a composition bias toward polar residues. Residues 89 to 100 (SPKFSSKLSSPS) are compositionally biased toward low complexity. At serine 100 the chain carries Phosphoserine. The FHA domain maps to 118–170 (ITVGRNSSQCDVALCKNKFISRVHASITYLPQTNEVKIHCFSMNGLIVTYRKQ). Residues 316–366 (SSPLSSVSSVDHEEQTLRQDSLSSDKNPMTMKKPKLNKRVLPSKPKKSVKE) are disordered. Positions 333-342 (RQDSLSSDKN) are enriched in polar residues.

Belongs to the PLM2/TOS4 family. Post-translationally, phosphorylated by CDC28.

It is found in the nucleus. Its function is as follows. Binds to the promoters of genes with functions important for the G1/S (start) transition; primarily genes involved in pheromone response, polarized growth and transcription. The protein is Protein TOS4 (TOS4) of Saccharomyces cerevisiae (strain ATCC 204508 / S288c) (Baker's yeast).